We begin with the raw amino-acid sequence, 415 residues long: uncharacterized protein (415 aa).

The region spanning 1 to 55 (MSTGTVTIDRLGAQGDGVARTEAGPVFAPFTLPGETVSLAVNKANGTLISLKEAS) is the TRAM domain. [4Fe-4S] cluster is bound by residues Cys-63, Cys-75, Cys-78, and Cys-152. S-adenosyl-L-methionine-binding residues include Gln-252, Phe-279, Glu-299, and Asp-347. Cys-373 serves as the catalytic Nucleophile.

This sequence belongs to the class I-like SAM-binding methyltransferase superfamily. RNA M5U methyltransferase family.

This is an uncharacterized protein from Rhizobium meliloti (strain 1021) (Ensifer meliloti).